The sequence spans 259 residues: Short chain dehydrogenase ausX (259 aa).

The NADP(+) site is built by I13, D59, R121, Y153, K157, and V186. Y153 functions as the Proton acceptor in the catalytic mechanism. Y153 serves as the catalytic Proton donor. K157 functions as the Lowers pKa of active site Tyr in the catalytic mechanism.

The protein belongs to the short-chain dehydrogenases/reductases (SDR) family.

The protein operates within secondary metabolite biosynthesis; terpenoid biosynthesis. Functionally, short chain dehydrogenase; part of the gene cluster A that mediates the biosynthesis of the fungal meroterpenoid acetoxydehydroaustin. The first step of the pathway is the synthesis of 3,5-dimethylorsellinic acid by the polyketide synthase ausA. 3,5-dimethylorsellinic acid is then prenylated by the polyprenyl transferase ausN. Further epoxidation by the FAD-dependent monooxygenase ausM and cyclization by the probable terpene cyclase ausL lead to the formation of protoaustinoid A. Protoaustinoid A is then oxidized to spiro-lactone preaustinoid A3 by the combined action of the FAD-binding monooxygenases ausB and ausC, and the dioxygenase ausE. Acid-catalyzed keto-rearrangement and ring contraction of the tetraketide portion of preaustinoid A3 by ausJ lead to the formation of preaustinoid A4. The aldo-keto reductase ausK, with the help of ausH, is involved in the next step by transforming preaustinoid A4 into isoaustinone which is in turn hydroxylated by the P450 monooxygenase ausI to form austinolide. The cytochrome P450 monooxygenase ausG then modifies austinolide to austinol. Austinol is further acetylated to austin by the O-acetyltransferase ausP, which spontaneously changes to dehydroaustin. The cytochrome P450 monooxygenase then converts dehydroaustin is into 7-dehydrodehydroaustin. The hydroxylation catalyzed by ausR permits the second O-acetyltransferase ausQ to add an additional acetyl group to the molecule, leading to the formation of acetoxydehydroaustin. Due to genetic rearrangements of the clusters and the subsequent loss of some enzymes, the end product of the Penicillium brasilianum austinoid biosynthesis clusters is acetoxydehydroaustin. This chain is Short chain dehydrogenase ausX, found in Penicillium brasilianum.